A 775-amino-acid polypeptide reads, in one-letter code: Outer capsid protein VP4 (775 aa).

The tract at residues 65–223 is spike head; it reads LDGPYQPTSF…KCVEYINTGL (159 aa). The spike body and stalk (antigen domain) stretch occupies residues 247–478; that stretch reads AQVSEDIIIS…LISLVPSNDD (232 aa). The DGE motif; interaction with ITGA2/ITGB1 heterodimer signature appears at 307–309; that stretch reads DGE. Cys-317 and Cys-379 are joined by a disulfide. The interval 388 to 408 is hydrophobic; possible role in virus entry into host cell; it reads MPVGAWPVMSGGAVSLHFAGV. A YGL motif; interaction with ITGA4 motif is present at residues 447–449; the sequence is YGL. Residues 483-510 are a coiled coil; that stretch reads IMNSITVRQDLERQLGDLREEFNSLSQE. The segment at 509–775 is spike foot; the sequence is QEIAITQLID…IEQLILQCRL (267 aa). Positions 643–645 match the KID motif; interaction with HSPA8 motif; sequence KID.

This sequence belongs to the rotavirus VP4 family. Homotrimer. VP4 adopts a dimeric appearance above the capsid surface, while forming a trimeric base anchored inside the capsid layer. Only hints of the third molecule are observed above the capsid surface. It probably performs a series of molecular rearrangements during viral entry. Prior to trypsin cleavage, it is flexible. The priming trypsin cleavage triggers its rearrangement into rigid spikes with approximate two-fold symmetry of their protruding parts. After an unknown second triggering event, cleaved VP4 may undergo another rearrangement, in which two VP5* subunits fold back on themselves and join a third subunit to form a tightly associated trimer, shaped like a folded umbrella. Interacts with VP6. Interacts with VP7. In terms of assembly, homotrimer. The trimer is coiled-coil stabilized by its C-terminus, however, its N-terminus, known as antigen domain or 'body', seems to be flexible allowing it to self-associate either as a dimer or a trimer. Post-translationally, proteolytic cleavage by trypsin results in activation of VP4 functions and greatly increases infectivity. The penetration into the host cell is dependent on trypsin treatment of VP4. It produces two peptides, VP5* and VP8* that remain associated with the virion. Cleavage of VP4 by trypsin probably occurs in vivo in the lumen of the intestine prior to infection of enterocytes. Trypsin seems to be incorporated into the three-layered viral particles but remains inactive as long as the viral outer capsid is intact and would only be activated upon the solubilization of the latter.

It is found in the virion. The protein resides in the host rough endoplasmic reticulum. The protein localises to the host cell membrane. It localises to the host cytoplasm. Its subcellular location is the host cytoskeleton. It is found in the host endoplasmic reticulum-Golgi intermediate compartment. Its function is as follows. Spike-forming protein that mediates virion attachment to the host epithelial cell receptors and plays a major role in cell penetration, determination of host range restriction and virulence. Rotavirus attachment and entry into the host cell probably involves multiple sequential contacts between the outer capsid proteins VP4 and VP7, and the cell receptors. It is subsequently lost, together with VP7, following virus entry into the host cell. Following entry into the host cell, low intracellular or intravesicular Ca(2+) concentration probably causes the calcium-stabilized VP7 trimers to dissociate from the virion. This step is probably necessary for the membrane-disrupting entry step and the release of VP4, which is locked onto the virion by VP7. During the virus exit from the host cell, VP4 seems to be required to target the newly formed virions to the host cell lipid rafts. Functionally, forms the spike 'foot' and 'body' and acts as a membrane permeabilization protein that mediates release of viral particles from endosomal compartments into the cytoplasm. During entry, the part of VP5* that protrudes from the virus folds back on itself and reorganizes from a local dimer to a trimer. This reorganization may be linked to membrane penetration by exposing VP5* hydrophobic region. In integrin-dependent strains, VP5* targets the integrin heterodimer ITGA2/ITGB1 for cell attachment. Forms the head of the spikes and mediates the recognition of specific host cell surface glycans. It is the viral hemagglutinin and an important target of neutralizing antibodies. In sialic acid-dependent strains, VP8* binds to host cell sialic acid, most probably a ganglioside, providing the initial contact. In some other strains, VP8* mediates the attachment to histo-blood group antigens (HBGAs) for viral entry. This chain is Outer capsid protein VP4, found in Homo sapiens (Human).